Here is a 490-residue protein sequence, read N- to C-terminus: Dual specificity protein kinase CLK3 (490 aa).

The segment at 1-138 (MHHCKRYRSP…SKRSSRSVED (138 aa)) is disordered. Phosphotyrosine is present on Tyr7. Residues Ser9, Ser49, Ser51, Ser67, Ser76, and Ser78 each carry the phosphoserine modification. 2 stretches are compositionally biased toward basic and acidic residues: residues 26–56 (YSREHEGRLRYPSRREPPPRRSRSRSHDRIP) and 63–76 (EHRDSDTYRCEERS). The span at 88 to 116 (RSRHRRRSRERGPYRTRKHAHHCHKRRTR) shows a compositional bias: basic residues. Positions 117-130 (SCSSASSRSQQSSK) are enriched in low complexity. A Phosphoserine modification is found at Ser135. The 317-residue stretch at 156–472 (YEIVGNLGEG…LAEALLHPFF (317 aa)) folds into the Protein kinase domain. Residues 162-170 (LGEGTFGKV) and Lys186 contribute to the ATP site. Asp283 serves as the catalytic Proton acceptor.

The protein belongs to the protein kinase superfamily. CMGC Ser/Thr protein kinase family. Lammer subfamily. In terms of processing, autophosphorylates on all three types of residues.

The protein resides in the nucleus. It localises to the cytoplasm. Its subcellular location is the cytoplasmic vesicle. It is found in the secretory vesicle. The protein localises to the acrosome. The enzyme catalyses L-seryl-[protein] + ATP = O-phospho-L-seryl-[protein] + ADP + H(+). The catalysed reaction is L-threonyl-[protein] + ATP = O-phospho-L-threonyl-[protein] + ADP + H(+). It catalyses the reaction L-tyrosyl-[protein] + ATP = O-phospho-L-tyrosyl-[protein] + ADP + H(+). With respect to regulation, leucettine L41 inhibits its kinase activity and affects the regulation of alternative splicing mediated by phosphorylation of SR proteins. In terms of biological role, dual specificity kinase acting on both serine/threonine and tyrosine-containing substrates. Phosphorylates serine- and arginine-rich (SR) proteins of the spliceosomal complex. May be a constituent of a network of regulatory mechanisms that enable SR proteins to control RNA splicing and can cause redistribution of SR proteins from speckles to a diffuse nucleoplasmic distribution. Phosphorylates SRSF1 and SRSF3. Regulates the alternative splicing of tissue factor (F3) pre-mRNA in endothelial cells. The protein is Dual specificity protein kinase CLK3 (Clk3) of Rattus norvegicus (Rat).